Consider the following 173-residue polypeptide: Mesencephalic astrocyte-derived neurotrophic factor homolog (173 aa).

The N-terminal stretch at 1–22 (MNTSQIVLMFCLVVGVAQTALA) is a signal peptide. 4 cysteine pairs are disulfide-bonded: cysteine 28–cysteine 114, cysteine 31–cysteine 103, cysteine 61–cysteine 72, and cysteine 148–cysteine 151.

It belongs to the ARMET family.

The protein localises to the secreted. Its function is as follows. Required during the maturation of the embryonic nervous system for maintenance of neuronal and cuticular connectivity. Essential for maintenance of dopaminergic neurons and dopamine levels. The chain is Mesencephalic astrocyte-derived neurotrophic factor homolog from Drosophila grimshawi (Hawaiian fruit fly).